The primary structure comprises 120 residues: NADH-ubiquinone oxidoreductase chain 3 (120 aa).

The next 3 helical transmembrane spans lie at 7-27 (FVYILVLLAISTGLSVILFFL), 62-82 (FYLVAILFLIFDLEITFLFPF), and 89-109 (MTLLSYSLMLIFLIILTIGFI).

This sequence belongs to the complex I subunit 3 family.

It is found in the mitochondrion membrane. The catalysed reaction is a ubiquinone + NADH + 5 H(+)(in) = a ubiquinol + NAD(+) + 4 H(+)(out). Core subunit of the mitochondrial membrane respiratory chain NADH dehydrogenase (Complex I) that is believed to belong to the minimal assembly required for catalysis. Complex I functions in the transfer of electrons from NADH to the respiratory chain. The immediate electron acceptor for the enzyme is believed to be ubiquinone. The polypeptide is NADH-ubiquinone oxidoreductase chain 3 (nad3) (Dictyostelium discoideum (Social amoeba)).